The chain runs to 329 residues: Ribosomal protein L11 methyltransferase (329 aa).

S-adenosyl-L-methionine is bound by residues Thr177, Gly198, Asp220, and Asn264.

Belongs to the methyltransferase superfamily. PrmA family.

Its subcellular location is the cytoplasm. The enzyme catalyses L-lysyl-[protein] + 3 S-adenosyl-L-methionine = N(6),N(6),N(6)-trimethyl-L-lysyl-[protein] + 3 S-adenosyl-L-homocysteine + 3 H(+). In terms of biological role, methylates ribosomal protein L11. In Helicobacter pylori (strain J99 / ATCC 700824) (Campylobacter pylori J99), this protein is Ribosomal protein L11 methyltransferase.